A 234-amino-acid chain; its full sequence is Phosphoribosylaminoimidazole-succinocarboxamide synthase (234 aa).

It belongs to the SAICAR synthetase family.

It catalyses the reaction 5-amino-1-(5-phospho-D-ribosyl)imidazole-4-carboxylate + L-aspartate + ATP = (2S)-2-[5-amino-1-(5-phospho-beta-D-ribosyl)imidazole-4-carboxamido]succinate + ADP + phosphate + 2 H(+). The protein operates within purine metabolism; IMP biosynthesis via de novo pathway; 5-amino-1-(5-phospho-D-ribosyl)imidazole-4-carboxamide from 5-amino-1-(5-phospho-D-ribosyl)imidazole-4-carboxylate: step 1/2. The protein is Phosphoribosylaminoimidazole-succinocarboxamide synthase of Clostridium botulinum (strain Loch Maree / Type A3).